A 417-amino-acid chain; its full sequence is NADH-quinone oxidoreductase subunit D (417 aa).

Belongs to the complex I 49 kDa subunit family. NDH-1 is composed of 14 different subunits. Subunits NuoB, C, D, E, F, and G constitute the peripheral sector of the complex.

The protein localises to the cell inner membrane. It carries out the reaction a quinone + NADH + 5 H(+)(in) = a quinol + NAD(+) + 4 H(+)(out). In terms of biological role, NDH-1 shuttles electrons from NADH, via FMN and iron-sulfur (Fe-S) centers, to quinones in the respiratory chain. The immediate electron acceptor for the enzyme in this species is believed to be ubiquinone. Couples the redox reaction to proton translocation (for every two electrons transferred, four hydrogen ions are translocated across the cytoplasmic membrane), and thus conserves the redox energy in a proton gradient. This is NADH-quinone oxidoreductase subunit D from Francisella tularensis subsp. holarctica (strain FTNF002-00 / FTA).